Here is a 208-residue protein sequence, read N- to C-terminus: Imidazoleglycerol-phosphate dehydratase (208 aa).

The protein belongs to the imidazoleglycerol-phosphate dehydratase family.

Its subcellular location is the cytoplasm. The enzyme catalyses D-erythro-1-(imidazol-4-yl)glycerol 3-phosphate = 3-(imidazol-4-yl)-2-oxopropyl phosphate + H2O. It participates in amino-acid biosynthesis; L-histidine biosynthesis; L-histidine from 5-phospho-alpha-D-ribose 1-diphosphate: step 6/9. This chain is Imidazoleglycerol-phosphate dehydratase, found in Psychrobacter sp. (strain PRwf-1).